The sequence spans 336 residues: MAKVYYEKDVTVNVLKEKKVAIIGYGSQGHAHAQNLRDNGFDVVVGLRKGKSWDKAKEDGFSVYTVAEAAKKADVVMILLPDELQPEVYEAEIAPNLQAGNSLVFAHGFNVHFDQVKPPVNVDVFLVAPKGPGHLVRRTFVEGGAVPALFAVYQDATGVATEKALSYADGIGATRAGVLETTFKEETETDLFGEQAVLCGGVTALVKAGFETLVDAGYQPELAYFECLHELKLIVDLMYEGGLENMRYSVSDTAQWGDFVSGPRVVTEDTKKAMDTVLAEIQDGTFARGWIAEHKAGRPNFHATNEKENEHEIEVVGRKLREMMPFVQPRVKAGVK.

A KARI N-terminal Rossmann domain is found at 2–181 (AKVYYEKDVT…GATRAGVLET (180 aa)). NADP(+) is bound by residues 25–28 (YGSQ), R48, S52, and 82–85 (DELQ). The active site involves H107. NADP(+) is bound at residue G133. Residues 182–327 (TFKEETETDL…RKLREMMPFV (146 aa)) form the KARI C-terminal knotted domain. Residues D190, E194, E226, and E230 each contribute to the Mg(2+) site. Residue S251 participates in substrate binding.

It belongs to the ketol-acid reductoisomerase family. It depends on Mg(2+) as a cofactor.

The enzyme catalyses (2R)-2,3-dihydroxy-3-methylbutanoate + NADP(+) = (2S)-2-acetolactate + NADPH + H(+). It carries out the reaction (2R,3R)-2,3-dihydroxy-3-methylpentanoate + NADP(+) = (S)-2-ethyl-2-hydroxy-3-oxobutanoate + NADPH + H(+). It participates in amino-acid biosynthesis; L-isoleucine biosynthesis; L-isoleucine from 2-oxobutanoate: step 2/4. It functions in the pathway amino-acid biosynthesis; L-valine biosynthesis; L-valine from pyruvate: step 2/4. Involved in the biosynthesis of branched-chain amino acids (BCAA). Catalyzes an alkyl-migration followed by a ketol-acid reduction of (S)-2-acetolactate (S2AL) to yield (R)-2,3-dihydroxy-isovalerate. In the isomerase reaction, S2AL is rearranged via a Mg-dependent methyl migration to produce 3-hydroxy-3-methyl-2-ketobutyrate (HMKB). In the reductase reaction, this 2-ketoacid undergoes a metal-dependent reduction by NADPH to yield (R)-2,3-dihydroxy-isovalerate. This chain is Ketol-acid reductoisomerase (NADP(+)) 1, found in Bacillus thuringiensis subsp. konkukian (strain 97-27).